A 156-amino-acid chain; its full sequence is Small ribosomal subunit protein uS7 (156 aa).

It belongs to the universal ribosomal protein uS7 family. Part of the 30S ribosomal subunit. Contacts proteins S9 and S11.

One of the primary rRNA binding proteins, it binds directly to 16S rRNA where it nucleates assembly of the head domain of the 30S subunit. Is located at the subunit interface close to the decoding center, probably blocks exit of the E-site tRNA. The polypeptide is Small ribosomal subunit protein uS7 (Desulfitobacterium hafniense (strain DSM 10664 / DCB-2)).